The primary structure comprises 591 residues: L-fucose isomerase (591 aa).

Residues E337 and D361 each act as proton acceptor in the active site. E337, D361, and H528 together coordinate Mn(2+).

It belongs to the L-fucose isomerase family. As to quaternary structure, homohexamer. It depends on Mn(2+) as a cofactor.

The protein localises to the cytoplasm. It carries out the reaction L-fucose = L-fuculose. It functions in the pathway carbohydrate degradation; L-fucose degradation; L-lactaldehyde and glycerone phosphate from L-fucose: step 1/3. Its function is as follows. Converts the aldose L-fucose into the corresponding ketose L-fuculose. The protein is L-fucose isomerase of Escherichia coli O157:H7 (strain EC4115 / EHEC).